The chain runs to 105 residues: MEDLSFRHPVRARADGARRSAIVGIVASGNLEVLVERVLPDAECAIDIKTAAVGFGEVWRAVIGDFVERYSPGGLKFSINDGGARPDTVSLRLAQAVRSIAENGQ.

An O-(phosphoribosyl dephospho-coenzyme A)serine modification is found at serine 28.

Belongs to the MdcC family. Covalently binds the prosthetic group of malonate decarboxylase.

It is found in the cytoplasm. Functionally, subunit of malonate decarboxylase, it is an acyl carrier protein to which acetyl and malonyl thioester residues are bound via a 2'-(5''-phosphoribosyl)-3'-dephospho-CoA prosthetic group and turn over during the catalytic mechanism. This Bradyrhizobium diazoefficiens (strain JCM 10833 / BCRC 13528 / IAM 13628 / NBRC 14792 / USDA 110) protein is Malonate decarboxylase acyl carrier protein.